The primary structure comprises 528 residues: 3-ketoacyl-CoA synthase 2 (528 aa).

A run of 2 helical transmembrane segments spans residues 36 to 56 and 78 to 98; these read LGYH…VGLL and FHFL…TLYF. The region spanning 97-388 is the FAE domain; that stretch reads YFTTRPRRIF…FFATLVARKV (292 aa). Catalysis depends on residues C241, H320, H407, H411, and N444.

The protein belongs to the thiolase-like superfamily. Chalcone/stilbene synthases family. Expressed in siliques, flowers and stems. In young seedlings, expressed in the central cylinder of primary roots, in emerging lateral roots and in their root cap, but not in aboveground tissues such as hypocotyls, cotyledons and leaves. Expressed in sepals in mature flowers and in the chalaza and micropyle region of developing seeds shortly prior to or just after the detachment from the funiculus. Expressed in roots, flowers, cauline leaves and siliques.

It is found in the membrane. The enzyme catalyses a very-long-chain acyl-CoA + malonyl-CoA + H(+) = a very-long-chain 3-oxoacyl-CoA + CO2 + CoA. Its pathway is lipid metabolism; fatty acid biosynthesis. With respect to regulation, inhibited by K3 herbicides such as allidochlor, anilofos, cafenstrole and flufenacet. Strongly inhibited by metazachlor. Mediates the synthesis of VLCFAs from 22 to 26 carbons in length (e.g. C22, C24, C26). Involved in the elongation of C20 fatty acid suberin precursors. Functionally redundant with KCS20 in the two-carbon elongation of C22 fatty acids that is required for cuticular wax and root suberin biosynthesis. The polypeptide is 3-ketoacyl-CoA synthase 2 (Arabidopsis thaliana (Mouse-ear cress)).